A 259-amino-acid polypeptide reads, in one-letter code: Ribonuclease HII (259 aa).

Positions 1–26 (MLSTPPKLPSAHGPVHFPRRSGTGMN) are disordered. One can recognise an RNase H type-2 domain in the interval 55–243 (APVAGADEAG…VRAQQLVLFE (189 aa)). A divalent metal cation is bound by residues Asp61, Glu62, and Asp152.

It belongs to the RNase HII family. Mn(2+) serves as cofactor. Requires Mg(2+) as cofactor.

The protein localises to the cytoplasm. It catalyses the reaction Endonucleolytic cleavage to 5'-phosphomonoester.. Endonuclease that specifically degrades the RNA of RNA-DNA hybrids. This is Ribonuclease HII from Azorhizobium caulinodans (strain ATCC 43989 / DSM 5975 / JCM 20966 / LMG 6465 / NBRC 14845 / NCIMB 13405 / ORS 571).